The sequence spans 609 residues: Pentatricopeptide repeat-containing protein At5g13770, chloroplastic (609 aa).

A chloroplast-targeting transit peptide spans 1 to 44 (MAIASGSWVATVNHHANPHSFTSPTKPIFFLSQKPHNFHVCSSR). PPR repeat units lie at residues 103–137 (ELRT…KALP), 138–168 (DGQT…FRSD), 172–207 (AVSA…GVEP), 208–242 (SPGC…RLSF), 247–281 (SGSI…GIPE), 282–316 (SSEL…KLLK), 317–351 (DPEM…ELKV), 352–386 (TDCI…ECEA), 387–421 (GQVT…GFDK), 422–456 (CVVA…GCKP), 457–491 (NIWI…KVLP), 492–526 (DKVS…RGKI), and 527–561 (DRAM…GTRL).

It belongs to the PPR family. P subfamily.

It is found in the plastid. Its subcellular location is the chloroplast. The sequence is that of Pentatricopeptide repeat-containing protein At5g13770, chloroplastic from Arabidopsis thaliana (Mouse-ear cress).